The chain runs to 687 residues: Polyphosphate kinase (687 aa).

Residue N45 coordinates ATP. The Mg(2+) site is built by R373 and R403. The active-site Phosphohistidine intermediate is the H433. ATP-binding residues include Y466, R562, and H590. In terms of domain architecture, PLD phosphodiesterase spans 585–615 (DRFLEHDRVYVFENKGDKLVYLSSADWMTRN).

Belongs to the polyphosphate kinase 1 (PPK1) family. Mg(2+) is required as a cofactor. In terms of processing, an intermediate of this reaction is the autophosphorylated ppk in which a phosphate is covalently linked to a histidine residue through a N-P bond.

It carries out the reaction [phosphate](n) + ATP = [phosphate](n+1) + ADP. Its function is as follows. Catalyzes the reversible transfer of the terminal phosphate of ATP to form a long-chain polyphosphate (polyP). The chain is Polyphosphate kinase from Yersinia pestis.